The sequence spans 1032 residues: Toll-like receptor 9 (1032 aa).

An N-terminal signal peptide occupies residues 1–25 (MVLRRRTLHPLSLLVQAAVLAETLA). Residues 26-818 (LGTLPAFLPC…LCLDEVLSWD (793 aa)) are Extracellular-facing. Residues C35 and C45 are joined by a disulfide bond. Residue 47–51 (WLFLK) participates in DNA binding. 26 LRR repeats span residues 62 to 85 (CSNI…DFVH), 87 to 110 (SNLR…HFSC), 122 to 147 (MRTL…SLVN), 150 to 166 (LSHT…LAGL), 167 to 190 (YSLR…AVKV), 198 to 221 (LSNL…LPPS), 223 to 242 (EYLL…DLAN), 243 to 268 (LTSL…CIEC), 283 to 306 (LSHL…WFQG), 308 to 332 (VNLS…AFQN), 333 to 356 (LTRL…RLHL), 363 to 386 (LVSL…TLRW), 390 to 413 (LPKL…IFGT), 415 to 440 (RALR…TPEE), 471 to 495 (CKNF…MFVN), 497 to 520 (SRLQ…QFLP), 521 to 544 (LTNL…SFSE), 546 to 573 (PQLQ…SFVT), 575 to 599 (LSML…LNSN), 601 to 623 (VRFL…LYLH), 628 to 651 (LSGL…NLDN), 653 to 676 (PKSL…SLSF), 677 to 700 (LPNL…TLPN), 702 to 724 (TLLQ…FFAL), 725 to 748 (AVEL…WFGP), and 750 to 773 (VMNL…AFVD). N64 carries N-linked (GlcNAc...) asparagine glycosylation. DNA is bound by residues 72–77 (SNRIHH) and 95–109 (KWNC…LHFS). Cysteines 98 and 110 form a disulfide. Residue N129 is glycosylated (N-linked (GlcNAc...) asparagine). Y132 provides a ligand contact to DNA. Residue N147 is glycosylated (N-linked (GlcNAc...) asparagine). Residues C178 and C184 are joined by a disulfide bond. 179 to 181 (YYK) contacts DNA. The N-linked (GlcNAc...) asparagine glycan is linked to N200. Residue Y208 coordinates DNA. N-linked (GlcNAc...) asparagine glycosylation is found at N210 and N242. Cystine bridges form between C255–C268 and C258–C265. S-palmitoyl cysteine attachment occurs at residues C258 and C265. Residues N300, N309, N332, and N340 are each glycosylated (N-linked (GlcNAc...) asparagine). The interval 430–462 (PSTLSEATPEEADDAEQEELLSADPHPAPLSTP) is disordered. Acidic residues predominate over residues 437-450 (TPEEADDAEQEELL). Cysteines 471 and 501 form a disulfide. 2 N-linked (GlcNAc...) asparagine glycosylation sites follow: N495 and N514. N-linked (GlcNAc...) asparagine glycosylation occurs at N568. Residues N670, N695, and N700 are each glycosylated (N-linked (GlcNAc...) asparagine). N732 and N752 each carry an N-linked (GlcNAc...) asparagine glycan. Disulfide bonds link C765/C791 and C767/C810. The helical transmembrane segment at 819–839 (CFGLSLLAVAVGMVVPILHHL) threads the bilayer. Over 840 to 1032 (CGWDVWYCFH…QNFCRGPTAE (193 aa)) the chain is Cytoplasmic. One can recognise a TIR domain in the interval 868 to 1013 (LPYDAFVVFD…GFWAQLSTAL (146 aa)).

It belongs to the Toll-like receptor family. In terms of assembly, monomer and homodimer. Exists as a monomer in the absence of unmethylated cytidine-phosphate-guanosine (CpG) ligand. Proteolytic processing of an insertion loop (Z-loop) is required for homodimerization upon binding to the unmethylated CpG ligand leading to its activation. Interacts with MYD88 via their respective TIR domains. Interacts with BTK. Interacts (via transmembrane domain) with UNC93B1. Interacts with CD300LH; the interaction may promote full activation of TLR9-triggered innate responses. Interacts with CNPY3 and HSP90B1; this interaction is required for proper folding in the endoplasmic reticulum. Interacts with SMPDL3B. Interacts with CD82; this interaction is essential for TLR9-dependent myddosome formation in response to CpG stimulation. In terms of processing, activated by proteolytic cleavage of the flexible loop between repeats LRR14 and LRR15 within the ectodomain. Cleavage requires UNC93B1. Proteolytically processed by first removing the majority of the ectodomain by either asparagine endopeptidase (AEP) or a cathepsin followed by a trimming event that is solely cathepsin mediated and required for optimal receptor signaling. Post-translationally, palmitoylated by ZDHHC3 in the Golgi regulates TLR9 trafficking from the Golgi to endosomes. Depalmitoylation by PPT1 controls the release of TLR9 from UNC93B1 in endosomes. In terms of tissue distribution, expressed in the basolateral region of gastric epithelial cells with high levels detected in antrum and body mucosa (at protein level). Detected in spleen and stomach at higher levels in C57BL/6 mice than BALB/C.

It localises to the endoplasmic reticulum membrane. Its subcellular location is the endosome. The protein resides in the lysosome. The protein localises to the cytoplasmic vesicle. It is found in the phagosome. Its function is as follows. Key component of innate and adaptive immunity. TLRs (Toll-like receptors) control host immune response against pathogens through recognition of molecular patterns specific to microorganisms. TLR9 is a nucleotide-sensing TLR which is activated by unmethylated cytidine-phosphate-guanosine (CpG) dinucleotides. Acts via MYD88 and TRAF6, leading to NF-kappa-B activation, cytokine secretion and the inflammatory response. Plays a role in defense against systemic mouse cytomegalovirus infection. Controls lymphocyte response to Helicobacter infection. Upon CpG stimulation, induces B-cell proliferation, activation, survival and antibody production. This Mus musculus (Mouse) protein is Toll-like receptor 9 (Tlr9).